The chain runs to 987 residues: Sarcosine oxidase subunit alpha (987 aa).

Asp198, Glu199, Ser206, Ala244, and Gly445 together coordinate NAD(+). Thr714 and Glu806 together coordinate (6R)-5,10-methylene-5,6,7,8-tetrahydrofolate.

Belongs to the GcvT family. In terms of assembly, heterotetramer composed of subunits alpha (SoxA), beta (SoxB), gamma (SoxG) and delta (SoxD). NAD(+) serves as cofactor.

The protein localises to the cytoplasm. The catalysed reaction is sarcosine + (6S)-5,6,7,8-tetrahydrofolate + O2 = (6R)-5,10-methylene-5,6,7,8-tetrahydrofolate + glycine + H2O2. It carries out the reaction sarcosine + O2 + H2O = formaldehyde + glycine + H2O2. In terms of biological role, in the presence of tetrahydrofolate, catalyzes the oxidative demethylation of sarcosine to yield glycine, 5,10-methylenetetrahydrofolate and hydrogen peroxide. In the absence of tetrahydrofolate, catalyzes the oxidative demethylation of sarcosine to yield glycine, formaldehyde and hydrogen peroxide. This chain is Sarcosine oxidase subunit alpha (soxA), found in Rhizobium meliloti (strain 1021) (Ensifer meliloti).